The following is a 130-amino-acid chain: Classical arabinogalactan protein 7 (130 aa).

A signal peptide spans 1-21 (MNSKIIEAFFIVALFTTSCLA). Q22 carries the post-translational modification Pyrrolidone carboxylic acid. Positions 22-108 (QAPAPSPTTT…DASAPPPNAA (87 aa)) are disordered. 5 positions are modified to 4-hydroxyproline: P24, P26, P28, P35, and P36. O-linked (Ara...) hydroxyproline glycosylation is found at P24, P26, P28, P35, and P36. Pro residues predominate over residues 33–68 (TPPPVATPPPAATPAPTTTPPPAVSPAPTSSPPSSA). The GPI-anchor amidated asparagine moiety is linked to residue N106. Positions 107–130 (AALTNKAFVVGSLVAAIIYAVVLA) are cleaved as a propeptide — removed in mature form.

It belongs to the classical AGP family. Post-translationally, O-glycosylated on hydroxyprolines; noncontiguous hydroxylproline residues are glycosylated with arabinogalactan.

The protein resides in the cell membrane. Its function is as follows. Proteoglycan that seems to be implicated in diverse developmental roles such as differentiation, cell-cell recognition, embryogenesis and programmed cell death. In Arabidopsis thaliana (Mouse-ear cress), this protein is Classical arabinogalactan protein 7 (AGP7).